A 229-amino-acid polypeptide reads, in one-letter code: uncharacterized protein (229 aa).

The first 26 residues, 1–26 (MSRNDARYLRCTAALGAAFFACGAAA), serve as a signal peptide directing secretion.

This sequence belongs to the OmpW/AlkL family.

It localises to the cell outer membrane. This is an uncharacterized protein from Sinorhizobium fredii (strain NBRC 101917 / NGR234).